The sequence spans 116 residues: Large ribosomal subunit protein bL19 (116 aa).

The protein belongs to the bacterial ribosomal protein bL19 family.

Its function is as follows. This protein is located at the 30S-50S ribosomal subunit interface and may play a role in the structure and function of the aminoacyl-tRNA binding site. The protein is Large ribosomal subunit protein bL19 of Actinobacillus pleuropneumoniae serotype 5b (strain L20).